A 98-amino-acid polypeptide reads, in one-letter code: Feather keratin 3 (98 aa).

Belongs to the avian keratin family. As to quaternary structure, the avian keratins (F-ker, S-ker, C-ker and B-ker) are a complex mixture of very similar polypeptides.

The chain is Feather keratin 3 from Gallus gallus (Chicken).